The following is a 238-amino-acid chain: Small ribosomal subunit protein uS2c (238 aa).

The protein belongs to the universal ribosomal protein uS2 family.

It is found in the plastid. The protein resides in the chloroplast. The polypeptide is Small ribosomal subunit protein uS2c (rps2) (Jasminum nudiflorum (Winter jasmine)).